A 265-amino-acid polypeptide reads, in one-letter code: Phosphate import ATP-binding protein PstB (265 aa).

The region spanning 11 to 260 is the ABC transporter domain; sequence VSADEVKIAA…PRDPRTESYI (250 aa). 50–57 serves as a coordination point for ATP; it reads GPSGCGKS.

The protein belongs to the ABC transporter superfamily. Phosphate importer (TC 3.A.1.7) family. The complex is composed of two ATP-binding proteins (PstB), two transmembrane proteins (PstC and PstA) and a solute-binding protein (PstS).

It is found in the cell inner membrane. The enzyme catalyses phosphate(out) + ATP + H2O = ADP + 2 phosphate(in) + H(+). Its function is as follows. Part of the ABC transporter complex PstSACB involved in phosphate import. Responsible for energy coupling to the transport system. This Cereibacter sphaeroides (strain ATCC 17023 / DSM 158 / JCM 6121 / CCUG 31486 / LMG 2827 / NBRC 12203 / NCIMB 8253 / ATH 2.4.1.) (Rhodobacter sphaeroides) protein is Phosphate import ATP-binding protein PstB.